Here is a 141-residue protein sequence, read N- to C-terminus: uncharacterized protein (141 aa).

The next 2 membrane-spanning stretches (helical) occupy residues 12 to 32 (GIAG…TLVT) and 35 to 55 (PGRV…SATW).

It localises to the cell membrane. This is an uncharacterized protein from Mycobacterium tuberculosis (strain CDC 1551 / Oshkosh).